The following is a 259-amino-acid chain: UPF0246 protein PSHAa2558 (259 aa).

It belongs to the UPF0246 family.

This chain is UPF0246 protein PSHAa2558, found in Pseudoalteromonas translucida (strain TAC 125).